A 549-amino-acid polypeptide reads, in one-letter code: Membrane protein insertase YidC (549 aa).

Residues 6–26 (NLLLIGLLLVSFMLWQSWMVD) traverse the membrane as a helical segment. Positions 35 to 55 (ATAESSVPASSGGDVPNQNDA) are disordered. 4 helical membrane-spanning segments follow: residues 349 to 369 (QFLH…TMIV), 424 to 444 (LGGC…YWTL), 462 to 482 (LSVK…MWYI), and 503 to 523 (PIVF…YWVV).

It belongs to the OXA1/ALB3/YidC family. Type 1 subfamily. In terms of assembly, interacts with the Sec translocase complex via SecD. Specifically interacts with transmembrane segments of nascent integral membrane proteins during membrane integration.

It is found in the cell inner membrane. Its function is as follows. Required for the insertion and/or proper folding and/or complex formation of integral membrane proteins into the membrane. Involved in integration of membrane proteins that insert both dependently and independently of the Sec translocase complex, as well as at least some lipoproteins. Aids folding of multispanning membrane proteins. This Tolumonas auensis (strain DSM 9187 / NBRC 110442 / TA 4) protein is Membrane protein insertase YidC.